Reading from the N-terminus, the 230-residue chain is Potassium/proton antiporter CemA (230 aa).

4 helical membrane passes run 7 to 27 (LPSL…SSSF), 107 to 127 (ILHF…FFLG), 145 to 165 (LNDS…VGFH), and 181 to 201 (FGWA…PVIL).

It belongs to the CemA family.

Its subcellular location is the plastid. The protein resides in the chloroplast inner membrane. It catalyses the reaction K(+)(in) + H(+)(out) = K(+)(out) + H(+)(in). Its function is as follows. Contributes to K(+)/H(+) antiport activity by supporting proton efflux to control proton extrusion and homeostasis in chloroplasts in a light-dependent manner to modulate photosynthesis. Prevents excessive induction of non-photochemical quenching (NPQ) under continuous-light conditions. Indirectly promotes efficient inorganic carbon uptake into chloroplasts. This is Potassium/proton antiporter CemA from Triticum aestivum (Wheat).